Here is a 126-residue protein sequence, read N- to C-terminus: Topoisomerase I damage affected protein 2 (126 aa).

At serine 2 the chain carries N-acetylserine.

The protein belongs to the TDA2 family.

It is found in the cytoplasm. The protein localises to the cell projection. The sequence is that of Topoisomerase I damage affected protein 2 (TDA2) from Saccharomyces cerevisiae (strain JAY291) (Baker's yeast).